Reading from the N-terminus, the 117-residue chain is Cytochrome c6 (117 aa).

A signal peptide spans 1–24; sequence MKKLLAIALTVLATVFAFGTPAFA. Cys-38, Cys-41, His-42, and Met-89 together coordinate heme c.

The protein belongs to the cytochrome c family. PetJ subfamily. As to quaternary structure, monomer. Binds 1 heme c group covalently per subunit.

The protein localises to the cellular thylakoid lumen. Functionally, functions as an electron carrier between membrane-bound cytochrome b6-f and photosystem I in oxygenic photosynthesis. In Picosynechococcus sp. (strain ATCC 27264 / PCC 7002 / PR-6) (Agmenellum quadruplicatum), this protein is Cytochrome c6 (petJ).